A 338-amino-acid chain; its full sequence is Ketol-acid reductoisomerase (NADP(+)) (338 aa).

Residues 1 to 181 (MQVYYDKDCD…GGGRTGIIET (181 aa)) form the KARI N-terminal Rossmann domain. Residues 24-27 (YGSQ), arginine 47, serine 50, serine 52, and 82-85 (DEFQ) contribute to the NADP(+) site. Residue histidine 107 is part of the active site. Glycine 133 is an NADP(+) binding site. A KARI C-terminal knotted domain is found at 182-327 (TFKDETETDL…EKLRGMMPWI (146 aa)). Mg(2+)-binding residues include aspartate 190, glutamate 194, glutamate 226, and glutamate 230. Serine 251 contributes to the substrate binding site.

Belongs to the ketol-acid reductoisomerase family. Mg(2+) is required as a cofactor.

It carries out the reaction (2R)-2,3-dihydroxy-3-methylbutanoate + NADP(+) = (2S)-2-acetolactate + NADPH + H(+). It catalyses the reaction (2R,3R)-2,3-dihydroxy-3-methylpentanoate + NADP(+) = (S)-2-ethyl-2-hydroxy-3-oxobutanoate + NADPH + H(+). It participates in amino-acid biosynthesis; L-isoleucine biosynthesis; L-isoleucine from 2-oxobutanoate: step 2/4. It functions in the pathway amino-acid biosynthesis; L-valine biosynthesis; L-valine from pyruvate: step 2/4. Functionally, involved in the biosynthesis of branched-chain amino acids (BCAA). Catalyzes an alkyl-migration followed by a ketol-acid reduction of (S)-2-acetolactate (S2AL) to yield (R)-2,3-dihydroxy-isovalerate. In the isomerase reaction, S2AL is rearranged via a Mg-dependent methyl migration to produce 3-hydroxy-3-methyl-2-ketobutyrate (HMKB). In the reductase reaction, this 2-ketoacid undergoes a metal-dependent reduction by NADPH to yield (R)-2,3-dihydroxy-isovalerate. This is Ketol-acid reductoisomerase (NADP(+)) from Alcanivorax borkumensis (strain ATCC 700651 / DSM 11573 / NCIMB 13689 / SK2).